Reading from the N-terminus, the 646-residue chain is Serine/threonine-protein kinase sck2 (646 aa).

Disordered regions lie at residues Val-17–Val-85 and Gly-143–Thr-176. A compositionally biased stretch (polar residues) spans Ser-68–Asp-80. A compositionally biased stretch (low complexity) spans Ser-149 to Ser-165. In terms of domain architecture, Protein kinase spans Phe-266–Phe-527. Residues Ile-272–Val-280 and Lys-295 each bind ATP. Asp-392 acts as the Proton acceptor in catalysis. An AGC-kinase C-terminal domain is found at Asp-528–Phe-605. The disordered stretch occupies residues Asn-609–Pro-646. Residues Ser-610 to Asp-621 are compositionally biased toward low complexity. The span at Asp-622–Asp-637 shows a compositional bias: basic and acidic residues.

Belongs to the protein kinase superfamily. AGC Ser/Thr protein kinase family. PKC subfamily.

It carries out the reaction L-seryl-[protein] + ATP = O-phospho-L-seryl-[protein] + ADP + H(+). It catalyses the reaction L-threonyl-[protein] + ATP = O-phospho-L-threonyl-[protein] + ADP + H(+). Its function is as follows. Protein kinase that is part of growth control pathway which is at least partially redundant with the cAMP pathway. The chain is Serine/threonine-protein kinase sck2 (sck2) from Schizosaccharomyces pombe (strain 972 / ATCC 24843) (Fission yeast).